We begin with the raw amino-acid sequence, 490 residues long: N-succinylglutamate 5-semialdehyde dehydrogenase (490 aa).

223-228 (GSSRTG) contacts NAD(+). Active-site residues include E246 and C280.

The protein belongs to the aldehyde dehydrogenase family. AstD subfamily.

The enzyme catalyses N-succinyl-L-glutamate 5-semialdehyde + NAD(+) + H2O = N-succinyl-L-glutamate + NADH + 2 H(+). It participates in amino-acid degradation; L-arginine degradation via AST pathway; L-glutamate and succinate from L-arginine: step 4/5. Its function is as follows. Catalyzes the NAD-dependent reduction of succinylglutamate semialdehyde into succinylglutamate. The polypeptide is N-succinylglutamate 5-semialdehyde dehydrogenase (Pseudoalteromonas atlantica (strain T6c / ATCC BAA-1087)).